The sequence spans 75 residues: Cytochrome c oxidase subunit 6C (75 aa).

Topologically, residues 1 to 13 (MASSALAKPQMRG) are mitochondrial matrix. Residues 14–54 (LLARRLRIHIVGAFVVSLGVAAFYKYAVAEPRKKAYADFYR) traverse the membrane as a helical segment. Topologically, residues 55 to 75 (NYDSVKYFEEMRKAGVFQSVK) are mitochondrial intermembrane.

This sequence belongs to the cytochrome c oxidase subunit 6c family. As to quaternary structure, component of the cytochrome c oxidase (complex IV, CIV), a multisubunit enzyme composed of 14 subunits. The complex is composed of a catalytic core of 3 subunits MT-CO1, MT-CO2 and MT-CO3, encoded in the mitochondrial DNA, and 11 supernumerary subunits COX4I, COX5A, COX5B, COX6A, COX6B, COX6C, COX7A, COX7B, COX7C, COX8 and NDUFA4, which are encoded in the nuclear genome. The complex exists as a monomer or a dimer and forms supercomplexes (SCs) in the inner mitochondrial membrane with NADH-ubiquinone oxidoreductase (complex I, CI) and ubiquinol-cytochrome c oxidoreductase (cytochrome b-c1 complex, complex III, CIII), resulting in different assemblies (supercomplex SCI(1)III(2)IV(1) and megacomplex MCI(2)III(2)IV(2)).

The protein localises to the mitochondrion inner membrane. It functions in the pathway energy metabolism; oxidative phosphorylation. Its function is as follows. Component of the cytochrome c oxidase, the last enzyme in the mitochondrial electron transport chain which drives oxidative phosphorylation. The respiratory chain contains 3 multisubunit complexes succinate dehydrogenase (complex II, CII), ubiquinol-cytochrome c oxidoreductase (cytochrome b-c1 complex, complex III, CIII) and cytochrome c oxidase (complex IV, CIV), that cooperate to transfer electrons derived from NADH and succinate to molecular oxygen, creating an electrochemical gradient over the inner membrane that drives transmembrane transport and the ATP synthase. Cytochrome c oxidase is the component of the respiratory chain that catalyzes the reduction of oxygen to water. Electrons originating from reduced cytochrome c in the intermembrane space (IMS) are transferred via the dinuclear copper A center (CU(A)) of subunit 2 and heme A of subunit 1 to the active site in subunit 1, a binuclear center (BNC) formed by heme A3 and copper B (CU(B)). The BNC reduces molecular oxygen to 2 water molecules using 4 electrons from cytochrome c in the IMS and 4 protons from the mitochondrial matrix. This Nycticebus coucang (Slow loris) protein is Cytochrome c oxidase subunit 6C (COX6C).